A 315-amino-acid chain; its full sequence is MAAPEVLESDLPNAVALLKNLQEQVMAVTAQVQTLTKKVQAKAYPTEKGLSLLEVKDQLLLMYLMDLSHLILDKASGGSLQGHPAVLRLVEIRTVLEKLRPLDQKLKYQIDKLVKTAVTGSLSENDPLRFKPHPSNMMSKLSSEDEEEDEAEEGQSGASGKKSGKGTAKKYVPPRLVPVHYDETEAEREKKRLERAKRRALSSSVIRELKEQYSDAPEEIRDARHPHVTRQSQEDQHRINYEESMMVRLSVSKREKGRRKRANVMSSQLHSLTHFSDISALTGGTPHLDEDQNPTKKRKKIPKKGRKKKGFRRRR.

Ala-2 bears the N-acetylalanine mark. Positions 5–42 (EVLESDLPNAVALLKNLQEQVMAVTAQVQTLTKKVQAK) form a coiled coil. Positions 41–174 (AKAYPTEKGL…KGTAKKYVPP (134 aa)) are necessary for interaction with EIF4E. Phosphoserine is present on residues Ser-121, Ser-142, and Ser-143. The interval 123–174 (SENDPLRFKPHPSNMMSKLSSEDEEEDEAEEGQSGASGKKSGKGTAKKYVPP) is disordered. Over residues 144-153 (EDEEEDEAEE) the composition is skewed to acidic residues. Positions 181–205 (YDETEAEREKKRLERAKRRALSSSV) form a coiled coil. Phosphoserine occurs at positions 204 and 214. Residues 252 to 315 (SKREKGRRKR…RKKKGFRRRR (64 aa)) are disordered. Polar residues predominate over residues 264 to 276 (VMSSQLHSLTHFS). Residues 295–315 (TKKRKKIPKKGRKKKGFRRRR) show a composition bias toward basic residues.

Belongs to the SAS10 family. As to quaternary structure, part of the small subunit (SSU) processome, composed of more than 70 proteins and the RNA chaperone small nucleolar RNA (snoRNA) U3. Interacts with CPEB1 and EIF4E.

Its subcellular location is the nucleus. It is found in the nucleolus. The protein resides in the chromosome. The protein localises to the centromere. It localises to the cytoplasm. Its subcellular location is the cell projection. It is found in the axon. The protein resides in the dendrite. The protein localises to the filopodium. Its function is as follows. Part of the small subunit (SSU) processome, first precursor of the small eukaryotic ribosomal subunit. During the assembly of the SSU processome in the nucleolus, many ribosome biogenesis factors, an RNA chaperone and ribosomal proteins associate with the nascent pre-rRNA and work in concert to generate RNA folding, modifications, rearrangements and cleavage as well as targeted degradation of pre-ribosomal RNA by the RNA exosome. Its dissociation from the complex determines the transition from state pre-A1 to state pre-A1*. Inhibits mRNA translation in a cytoplasmic polyadenylation element (CPE)-dependent manner. This Bos taurus (Bovine) protein is Neuroguidin (NGDN).